Reading from the N-terminus, the 162-residue chain is Regulator of sigma D (162 aa).

This sequence belongs to the Rsd/AlgQ family. Interacts with RpoD.

It is found in the cytoplasm. Binds RpoD and negatively regulates RpoD-mediated transcription activation by preventing the interaction between the primary sigma factor RpoD with the catalytic core of the RNA polymerase and with promoter DNA. May be involved in replacement of the RNA polymerase sigma subunit from RpoD to RpoS during the transition from exponential growth to the stationary phase. The chain is Regulator of sigma D from Salmonella arizonae (strain ATCC BAA-731 / CDC346-86 / RSK2980).